A 117-amino-acid polypeptide reads, in one-letter code: Gamma-aminobutyric acid receptor-associated protein (117 aa).

The interaction with beta-tubulin stretch occupies residues 1 to 22; it reads MKFVYKEEHPFEKRRSEGEKIR. The segment at 36–68 is interaction with GABRG2; it reads APKARIGDLDKKKYLVPSDLTVGQFYFLIRKRI. The interaction with GPHN stretch occupies residues 36–117; the sequence is APKARIGDLD…AYSDESVYGL (82 aa). Residues 48–50 are interaction with LIR (LC3 nteracting Region) motif of ATG3; that stretch reads KYL. Glycine 116 is lipidated: Phosphatidylethanolamine amidated glycine; alternate. Residue glycine 116 is the site of Phosphatidylserine amidated glycine; alternate attachment. Position 117 (leucine 117) is a propeptide, removed in mature form.

Belongs to the ATG8 family. As to quaternary structure, interacts with GPHN and NSF. Interacts with ATG3, ATG7 and ATG13. Interacts with alpha-tubulin. Interacts with beta-tubulin. Interacts with GABRG2. Interacts with RB1CC1. Interacts with ULK1. Interacts with CALR. Interacts with DDX47. Interacts with TP53INP1 and TP53INP2. Interacts with TBC1D5. Interacts with TBC1D25. Directly interacts with SQSTM1. Interacts with MAPK15. Interacts with TECPR2. Interacts with PCM1. Interacts with TRIM5 and TRIM21. Interacts with MEFV. Interacts with KIF21B. Interacts with WDFY3; this interaction is required for WDFY3 recruitment to MAP1LC3B-positive p62/SQSTM1 bodies. Interacts with FLCN; interaction regulates autophagy. Interacts with UBA5. Interacts with KBTBD6 and KBTBD7; the interaction is direct and required for the ubiquitination of TIAM1. Interacts with reticulophagy regulators RETREG1, RETREG2 and RETREG3. Interacts with IRGM. Interacts with STX17. Interacts with CT55; this interaction may be important for GABARAP protein stability. Interacts with DNM2. Interacts with NCOA4 (via C-terminus). In terms of processing, the precursor molecule is cleaved by ATG4 (ATG4A, ATG4B, ATG4C or ATG4D) to expose the glycine at the C-terminus and form the cytosolic form, GABARAP-I. The processed form is then activated by APG7L/ATG7, transferred to ATG3 and conjugated to phosphatidylethanolamine (PE) phospholipid to form the membrane-bound form, GABARAP-II. During non-canonical autophagy, the processed form is conjugated to phosphatidylserine (PS) phospholipid. ATG4 proteins also mediate the delipidation of PE-conjugated forms. In addition, ATG4B and ATG4D mediate delipidation of ATG8 proteins conjugated to PS during non-canonical autophagy. ATG4B constitutes the major protein for proteolytic activation. ATG4D is the main enzyme for delipidation activity. As to expression, expressed in brain (at protein level). Can be found in both somatodendritic and axonal compartment of neurons.

It is found in the cytoplasmic vesicle. The protein localises to the autophagosome membrane. The protein resides in the endomembrane system. Its subcellular location is the cytoplasm. It localises to the cytoskeleton. It is found in the golgi apparatus membrane. Functionally, ubiquitin-like modifier that plays a role in intracellular transport of GABA(A) receptors and its interaction with the cytoskeleton. Involved in autophagy: while LC3s are involved in elongation of the phagophore membrane, the GABARAP/GATE-16 subfamily is essential for a later stage in autophagosome maturation. Through its interaction with the reticulophagy receptor TEX264, participates in the remodeling of subdomains of the endoplasmic reticulum into autophagosomes upon nutrient stress, which then fuse with lysosomes for endoplasmic reticulum turnover. Also required for the local activation of the CUL3(KBTBD6/7) E3 ubiquitin ligase complex, regulating ubiquitination a nd degradation of TIAM1, a guanyl-nucleotide exchange factor (GEF) that activates RAC1 and downstream signal transduction. Thereby, regulates different biological processes including the organization of the cytoskeleton, cell migration and proliferation. Involved in apoptosis. This chain is Gamma-aminobutyric acid receptor-associated protein, found in Rattus norvegicus (Rat).